The sequence spans 110 residues: Thioredoxin (110 aa).

Residues lysine 3–alanine 108 enclose the Thioredoxin domain. Cysteine 32 and cysteine 35 are joined by a disulfide. Position 105 is an N6,N6-dimethyllysine; alternate (lysine 105). Lysine 105 is subject to N6-methyllysine; alternate.

In terms of biological role, participates in various redox reactions through the reversible oxidation of its active center dithiol to a disulfide and catalyzes dithiol-disulfide exchange reactions. The protein is Thioredoxin (trxA) of Chloroflexus aurantiacus (strain ATCC 29366 / DSM 635 / J-10-fl).